The sequence spans 175 residues: DM domain-containing protein mab-23 (175 aa).

Residues 8–56 (CQLCANHGIFNQPKKGHKQKCPYRTCPCSLCALNTKRRALDQIERQLKH) constitute a DNA-binding region (DM). Residues 58-93 (NEPMTGQTATSMASPTPECPLSPTTPKMTPHTPTSG) are disordered. Over residues 59 to 71 (EPMTGQTATSMAS) the composition is skewed to polar residues. Residues 81–91 (TTPKMTPHTPT) show a composition bias toward low complexity.

Expressed in a limited number of non-sex-specific tissues in males, including 6-8 unidentified neurons of the head, ventral body wall muscle, and the PHCL/R neurons.

It localises to the nucleus. Probable transcription factor that plays a role in the development of the dopaminergic neurons of the male-specific genital sensilla (simple sense organs) known as rays, by negatively regulating the activity of the transcription factor ast-1. Involved in male mating behavior, probably as a result of a role in the differentiation of male-specific diagonal muscles. Required for development of the male proctodeum. May be dispensable in hermaphrodites. This chain is DM domain-containing protein mab-23, found in Caenorhabditis elegans.